The chain runs to 740 residues: Putative Pol polyprotein from transposon element Bs1 (740 aa).

A PPR repeat occupies 469 to 503 (TAVAHNLLVQALFMDGRASDAYVVLEEMQNNGPFP).

Functionally, bs1 is probably an active plant retrotransposon. The polypeptide is Putative Pol polyprotein from transposon element Bs1 (Zea mays (Maize)).